The sequence spans 335 residues: Teichoic acids export ATP-binding protein TagH (335 aa).

Residues isoleucine 26–lysine 246 form the ABC transporter domain. Glycine 60 to serine 67 lines the ATP pocket.

Belongs to the ABC transporter superfamily. Teichoic acids exporter (TC 3.A.1.104.1) family. The complex is composed of two ATP-binding proteins (TagH) and two transmembrane proteins (TagG).

Its subcellular location is the cell membrane. The catalysed reaction is ATP + H2O + teichoic acidSide 1 = ADP + phosphate + teichoic acidSide 2.. Functionally, part of the ABC transporter complex TagGH involved in teichoic acids export. Responsible for energy coupling to the transport system. The chain is Teichoic acids export ATP-binding protein TagH from Listeria innocua serovar 6a (strain ATCC BAA-680 / CLIP 11262).